A 71-amino-acid chain; its full sequence is DNA-directed RNA polymerase subunit epsilon (71 aa).

The protein belongs to the RNA polymerase subunit epsilon family. As to quaternary structure, RNAP is composed of a core of 2 alpha, a beta and a beta' subunit. The core is associated with a delta subunit, and at least one of epsilon or omega. When a sigma factor is associated with the core the holoenzyme is formed, which can initiate transcription.

It carries out the reaction RNA(n) + a ribonucleoside 5'-triphosphate = RNA(n+1) + diphosphate. A non-essential component of RNA polymerase (RNAP). In Staphylococcus saprophyticus subsp. saprophyticus (strain ATCC 15305 / DSM 20229 / NCIMB 8711 / NCTC 7292 / S-41), this protein is DNA-directed RNA polymerase subunit epsilon.